Consider the following 78-residue polypeptide: Large ribosomal subunit protein bL28 (78 aa).

A disordered region spans residues 1 to 28 (MSAYCQVTGRKPGFGKQVSHSHRHTSRR).

The protein belongs to the bacterial ribosomal protein bL28 family.

The protein is Large ribosomal subunit protein bL28 of Corynebacterium urealyticum (strain ATCC 43042 / DSM 7109).